Consider the following 253-residue polypeptide: Hydroxyacylglutathione hydrolase (253 aa).

Residues His-54, His-56, Asp-58, His-59, His-112, Asp-131, and His-169 each coordinate Zn(2+).

It belongs to the metallo-beta-lactamase superfamily. Glyoxalase II family. As to quaternary structure, monomer. Requires Zn(2+) as cofactor.

The catalysed reaction is an S-(2-hydroxyacyl)glutathione + H2O = a 2-hydroxy carboxylate + glutathione + H(+). Its pathway is secondary metabolite metabolism; methylglyoxal degradation; (R)-lactate from methylglyoxal: step 2/2. In terms of biological role, thiolesterase that catalyzes the hydrolysis of S-D-lactoyl-glutathione to form glutathione and D-lactic acid. This is Hydroxyacylglutathione hydrolase from Bartonella quintana (strain Toulouse) (Rochalimaea quintana).